The sequence spans 217 residues: Probable transaldolase (217 aa).

The Schiff-base intermediate with substrate role is filled by K85.

Belongs to the transaldolase family. Type 3B subfamily.

It is found in the cytoplasm. The enzyme catalyses D-sedoheptulose 7-phosphate + D-glyceraldehyde 3-phosphate = D-erythrose 4-phosphate + beta-D-fructose 6-phosphate. It participates in carbohydrate degradation; pentose phosphate pathway; D-glyceraldehyde 3-phosphate and beta-D-fructose 6-phosphate from D-ribose 5-phosphate and D-xylulose 5-phosphate (non-oxidative stage): step 2/3. Its function is as follows. Transaldolase is important for the balance of metabolites in the pentose-phosphate pathway. This chain is Probable transaldolase, found in Agathobacter rectalis (strain ATCC 33656 / DSM 3377 / JCM 17463 / KCTC 5835 / VPI 0990) (Eubacterium rectale).